The primary structure comprises 531 residues: UDP-glucuronosyltransferase 1A5 (531 aa).

An N-terminal signal peptide occupies residues 1 to 25; the sequence is MGLHVTLQGLAGLLLLLYALPWAEG. Asn-116, Asn-131, Asn-139, Asn-293, and Asn-431 each carry an N-linked (GlcNAc...) asparagine glycan. Residues 489-505 form a helical membrane-spanning segment; that stretch reads VIGFLLAIVLTVVFIVY.

It belongs to the UDP-glycosyltransferase family. Homodimer. Homooligomer. Interacts with UGT1A1, UGT1A3, UGT1A4, UGT1A6, UGT1A7, UGT1A8, UGT1A9 and UGT1A10 to form heterodimers.

It is found in the endoplasmic reticulum membrane. It carries out the reaction glucuronate acceptor + UDP-alpha-D-glucuronate = acceptor beta-D-glucuronoside + UDP + H(+). The enzyme catalyses zolasartan + UDP-alpha-D-glucuronate = zolarsartan-1-N-beta-D-glucuronide + UDP. Functionally, UDP-glucuronosyltransferase (UGT) that catalyzes phase II biotransformation reactions in which lipophilic substrates are conjugated with glucuronic acid to increase the metabolite's water solubility, thereby facilitating excretion into either the urine or bile. Essential for the elimination and detoxification of drugs, xenobiotics and endogenous compounds. Involved in the glucuronidation of the AGTR1 angiotensin receptor antagonist zolarsatan, a drug which can inhibit the effect of angiotensin II. The sequence is that of UDP-glucuronosyltransferase 1A5 from Rattus norvegicus (Rat).